The following is a 443-amino-acid chain: Protein FAM83A (443 aa).

The interval 311–403 is disordered; it reads DSGVSVMTDS…YYQRNYAPDS (93 aa). The span at 315–326 shows a compositional bias: polar residues; it reads SVMTDSTPESVN. Composition is skewed to low complexity over residues 327–344 and 388–399; these read TTSE…SNDS and SNYQPNYYQRNY.

The protein belongs to the FAM83 family.

The protein resides in the cytoplasm. Its function is as follows. May function in the epidermal growth factor receptor/EGFR signaling pathway. The protein is Protein FAM83A of Xenopus laevis (African clawed frog).